A 376-amino-acid polypeptide reads, in one-letter code: N-acetyldiaminopimelate deacetylase (376 aa).

The active site involves D69. Residue E128 is the Proton acceptor of the active site.

This sequence belongs to the peptidase M20A family. N-acetyldiaminopimelate deacetylase subfamily.

The enzyme catalyses N-acetyl-(2S,6S)-2,6-diaminopimelate + H2O = (2S,6S)-2,6-diaminopimelate + acetate. The protein operates within amino-acid biosynthesis; L-lysine biosynthesis via DAP pathway; LL-2,6-diaminopimelate from (S)-tetrahydrodipicolinate (acetylase route): step 3/3. Its function is as follows. Catalyzes the conversion of N-acetyl-diaminopimelate to diaminopimelate and acetate. The sequence is that of N-acetyldiaminopimelate deacetylase from Streptococcus pneumoniae serotype 19F (strain G54).